We begin with the raw amino-acid sequence, 520 residues long: FNIP repeat-containing protein DDB_G0274063/DDB_G0272642 (520 aa).

Disordered regions lie at residues 47 to 86 and 100 to 121; these read QQQS…IDNR and NISS…SSSS. Residues 51–84 are compositionally biased toward low complexity; it reads NNNNNNNNNNNNNNNNNNFINFSNHTNNINNNID. FNIP repeat units follow at residues 242 to 285, 286 to 331, 332 to 406, and 453 to 496; these read YNNN…FGES, FNQD…FGLS, YNQP…FGVQ, and FNQQ…FHNS.

The sequence is that of FNIP repeat-containing protein DDB_G0274063/DDB_G0272642 from Dictyostelium discoideum (Social amoeba).